Reading from the N-terminus, the 481-residue chain is Two-component response regulator ORR32 (481 aa).

The Response regulatory domain occupies H13 to W138. A 4-aspartylphosphate modification is found at D66.

It belongs to the ARR family. Type-B subfamily. Post-translationally, two-component system major event consists of a His-to-Asp phosphorelay between a sensor histidine kinase (HK) and a response regulator (RR). In plants, the His-to-Asp phosphorelay involves an additional intermediate named Histidine-containing phosphotransfer protein (HPt). This multistep phosphorelay consists of a His-Asp-His-Asp sequential transfer of a phosphate group between first a His and an Asp of the HK protein, followed by the transfer to a conserved His of the HPt protein and finally the transfer to an Asp in the receiver domain of the RR protein.

Functionally, functions as a response regulator involved in His-to-Asp phosphorelay signal transduction system. Phosphorylation of the Asp residue in the receiver domain activates the ability of the protein to promote the transcription of target genes. May directly activate some type-A response regulators in response to cytokinins. The sequence is that of Two-component response regulator ORR32 from Oryza sativa subsp. japonica (Rice).